Reading from the N-terminus, the 339-residue chain is UDP-N-acetylenolpyruvoylglucosamine reductase (339 aa).

Residues 18-189 (GIDVRARLLA…LRVRLRLTRR (172 aa)) enclose the FAD-binding PCMH-type domain. Arginine 166 is an active-site residue. Serine 239 (proton donor) is an active-site residue. Glutamate 335 is an active-site residue.

The protein belongs to the MurB family. It depends on FAD as a cofactor.

Its subcellular location is the cytoplasm. It catalyses the reaction UDP-N-acetyl-alpha-D-muramate + NADP(+) = UDP-N-acetyl-3-O-(1-carboxyvinyl)-alpha-D-glucosamine + NADPH + H(+). It functions in the pathway cell wall biogenesis; peptidoglycan biosynthesis. Cell wall formation. In Pseudomonas aeruginosa (strain ATCC 15692 / DSM 22644 / CIP 104116 / JCM 14847 / LMG 12228 / 1C / PRS 101 / PAO1), this protein is UDP-N-acetylenolpyruvoylglucosamine reductase.